A 359-amino-acid chain; its full sequence is Peptide chain release factor 1 (359 aa).

At glutamine 236 the chain carries N5-methylglutamine.

Belongs to the prokaryotic/mitochondrial release factor family. In terms of processing, methylated by PrmC. Methylation increases the termination efficiency of RF1.

Its subcellular location is the cytoplasm. Peptide chain release factor 1 directs the termination of translation in response to the peptide chain termination codons UAG and UAA. The chain is Peptide chain release factor 1 from Streptococcus agalactiae serotype V (strain ATCC BAA-611 / 2603 V/R).